Here is a 233-residue protein sequence, read N- to C-terminus: MIELKHVTFGYNKKQMVLQDINITIPDGENVGILGESGCGKSTLASLVLGLFKPVKGEIYLSDNAVLPIFQHPLTSFNPDWTIETSLKEALYYYRGLTDNTAQDQLLIQHLSTFELNAQLLTKLPSEVSGGELQRFNVMRSLLAQPRVLICDEITSNLDVIAEQNVINILKAQTITNLNHFIVISHDLSVLQRLVNRIIVLKDGMIVDDFTIEELFNVDRHSYTKELVQAFSY.

The 227-residue stretch at 2–228 (IELKHVTFGY…DRHSYTKELV (227 aa)) folds into the ABC transporter domain. ATP is bound at residue 35-42 (GESGCGKS).

It belongs to the ABC transporter superfamily. The complex is composed of two ATP-binding proteins (NikD and NikE), two transmembrane proteins (NikB and NikC) and a solute-binding protein (NikA).

Its subcellular location is the cell membrane. The catalysed reaction is Ni(2+)(out) + ATP + H2O = Ni(2+)(in) + ADP + phosphate + H(+). In terms of biological role, part of the ABC transporter complex NikABCDE (Opp2) involved in nickel import. Probably responsible for energy coupling to the transport system. This Staphylococcus aureus (strain bovine RF122 / ET3-1) protein is Nickel import system ATP-binding protein NikE.